The following is a 219-amino-acid chain: Ribose-5-phosphate isomerase A (219 aa).

Substrate contacts are provided by residues 28 to 31 (SGST), 81 to 84 (DGAD), and 94 to 97 (KGGG). Glu103 serves as the catalytic Proton acceptor. Lys121 contacts substrate.

The protein belongs to the ribose 5-phosphate isomerase family. In terms of assembly, homodimer.

The catalysed reaction is aldehydo-D-ribose 5-phosphate = D-ribulose 5-phosphate. It functions in the pathway carbohydrate degradation; pentose phosphate pathway; D-ribose 5-phosphate from D-ribulose 5-phosphate (non-oxidative stage): step 1/1. In terms of biological role, catalyzes the reversible conversion of ribose-5-phosphate to ribulose 5-phosphate. In Haemophilus influenzae (strain ATCC 51907 / DSM 11121 / KW20 / Rd), this protein is Ribose-5-phosphate isomerase A.